Reading from the N-terminus, the 444-residue chain is MPIENYFGKKALIIGLGVSGRAAASFLQTSGVKVLGVDRDYLQLENQPEILELKAKGLVIQADCETIDLKTFDLIVVSPGIPSNHPLIKKAHEHKKEVIGEIELGCRASCHSIIGVTGTNGKTTVTLLITHILNANGLKAKALGNVGTPLTREILTLDFQEIAVLELSSYQLDTFQQQVLDEAVVLNITPDHLERYETMENYAKSKFQIGKCLKKSGKLFVERKAAVEYQHLLNFPHSTYGYLPSCHTYTDLCSVFLEGMQQFELPLEWQGKENHDLENLLAAYAICARRGIKPQQFLQALKTFQKPSHRVEFVLEKNGIHFYDDSKGTNIDAVMRAVQSINRPVFLIAGGVDKGASYVAWLNVFKGHVKKVYAIGQAANKIQKELSLHIRVQIEANLDDAVKQAYQDAKEGDAVLLSPGCASFDMFKDYIHRGEEFKRLVKLL.

118-124 (GTNGKTT) serves as a coordination point for ATP.

Belongs to the MurCDEF family.

It localises to the cytoplasm. The enzyme catalyses UDP-N-acetyl-alpha-D-muramoyl-L-alanine + D-glutamate + ATP = UDP-N-acetyl-alpha-D-muramoyl-L-alanyl-D-glutamate + ADP + phosphate + H(+). Its pathway is cell wall biogenesis; peptidoglycan biosynthesis. Functionally, cell wall formation. Catalyzes the addition of glutamate to the nucleotide precursor UDP-N-acetylmuramoyl-L-alanine (UMA). The chain is UDP-N-acetylmuramoylalanine--D-glutamate ligase from Protochlamydia amoebophila (strain UWE25).